Reading from the N-terminus, the 426-residue chain is Histidine--tRNA ligase (426 aa).

Belongs to the class-II aminoacyl-tRNA synthetase family.

Its subcellular location is the cytoplasm. It catalyses the reaction tRNA(His) + L-histidine + ATP = L-histidyl-tRNA(His) + AMP + diphosphate + H(+). The polypeptide is Histidine--tRNA ligase (hisS) (Thermoplasma volcanium (strain ATCC 51530 / DSM 4299 / JCM 9571 / NBRC 15438 / GSS1)).